Consider the following 578-residue polypeptide: Probable multidrug ABC transporter ATP-binding protein YbhF (578 aa).

2 consecutive ABC transporter domains span residues 6–237 and 330–559; these read ITLN…LMTS and IEAK…PDPT. ATP is bound by residues 40–47 and 362–369; these read GPDGAGKT and GPNGAGKS.

The protein belongs to the ABC transporter superfamily. In terms of assembly, the complex is probably composed of two ATP-binding proteins (YbhF) and two transmembrane proteins (YbhR and YbhS).

In terms of biological role, part of the ABC transporter complex YbhFSR that could be involved in efflux of cefoperazone. Probably responsible for energy coupling to the transport system. The chain is Probable multidrug ABC transporter ATP-binding protein YbhF (ybhF) from Escherichia coli (strain K12).